The primary structure comprises 326 residues: Fructokinase (326 aa).

Residues 275–326 (EQALRNGPDPRRQSRRRHRLPRRRQSTLGARDWSLRLEQDSDPHPPDDTFSP) are disordered. Basic residues predominate over residues 287 to 299 (QSRRRHRLPRRRQ). The segment covering 307-326 (WSLRLEQDSDPHPPDDTFSP) has biased composition (basic and acidic residues).

This sequence belongs to the carbohydrate kinase PfkB family.

The enzyme catalyses D-fructose + ATP = D-fructose 6-phosphate + ADP + H(+). The protein is Fructokinase (frk) of Rhizobium leguminosarum bv. trifolii.